The chain runs to 28 residues: Ranatuerin-2B (28 aa).

Cysteines 23 and 28 form a disulfide.

Expressed by the skin glands.

The protein resides in the secreted. Functionally, antibacterial activity against Gram-positive bacterium S.aureus and Gram-negative bacterium E.coli. Has activity against C.albicans. The sequence is that of Ranatuerin-2B from Lithobates berlandieri (Rio Grande leopard frog).